Reading from the N-terminus, the 662-residue chain is uncharacterized protein (662 aa).

Disordered regions lie at residues 1–94 (MSQR…NENN), 107–237 (DHNN…VKYH), 288–328 (ETTS…TPSA), 406–440 (QSSFLNKPTNNTETPTTTTTTTTTTTTTPSQPIQM), and 506–580 (QNSI…MVSP). Positions 25 to 49 (TTTTTPTPTTTTTTTSSLSSSTSST) are enriched in low complexity. The span at 77–87 (DNIKLDNEKTF) shows a compositional bias: basic and acidic residues. The span at 109–161 (NNNNNNNNNNNNNNNNNNNNNNNNNNNNNNNNNNNNNNNNNNNNNNNNNNNNN) shows a compositional bias: low complexity. Residues 162 to 176 (DTQKGTNKNENNCTD) show a composition bias toward polar residues. The span at 183–196 (STSTTSSSETGSST) shows a compositional bias: low complexity. Residues 203–212 (KTPQSCLKKS) are compositionally biased toward polar residues. The span at 213–224 (NNNNNDNNNNNN) shows a compositional bias: low complexity. Residues 226–235 (KTPRSTKKVK) show a composition bias toward basic residues. Composition is skewed to low complexity over residues 288–308 (ETTSVTSTTSTATTTTTTPIP), 413–434 (PTNNTETPTTTTTTTTTTTTTP), 515–526 (PTKSSSSTSIQQ), and 535–575 (NINN…NNNN).

This is an uncharacterized protein from Dictyostelium discoideum (Social amoeba).